A 241-amino-acid polypeptide reads, in one-letter code: RecQ-mediated genome instability protein 1 (241 aa).

This sequence belongs to the RMI1 family. As to quaternary structure, forms a complex with SGS1 and TOP3.

It localises to the cytoplasm. Its subcellular location is the nucleus. Structure-specific DNA-binding protein with a preference for cruciform structures. Also binds single-stranded DNA (ssDNA). Functions together with SGS1 and TOP3 to maintain genome integrity. Essential for proper meiotic cell division. Required for normal S-phase progression and DNA damage response. Required for resistance to the DNA-damaging agent methyl methanesulfonate (MMS). This Saccharomyces cerevisiae (strain ATCC 204508 / S288c) (Baker's yeast) protein is RecQ-mediated genome instability protein 1.